A 183-amino-acid polypeptide reads, in one-letter code: Glutamyl-tRNA(Gln) amidotransferase subunit F, mitochondrial (183 aa).

It belongs to the GatF family. Subunit of the heterotrimeric GatFAB amidotransferase (AdT) complex, composed of A (HER2), B (PET112) and F (YGR102C) subunits.

Its subcellular location is the mitochondrion inner membrane. It carries out the reaction L-glutamyl-tRNA(Gln) + L-glutamine + ATP + H2O = L-glutaminyl-tRNA(Gln) + L-glutamate + ADP + phosphate + H(+). Functionally, allows the formation of correctly charged Gln-tRNA(Gln) through the transamidation of misacylated Glu-tRNA(Gln) in the mitochondria. The reaction takes place in the presence of glutamine and ATP through an activated gamma-phospho-Glu-tRNA(Gln). Required for proper protein synthesis within the mitochondrion. This is Glutamyl-tRNA(Gln) amidotransferase subunit F, mitochondrial from Saccharomyces cerevisiae (strain ATCC 204508 / S288c) (Baker's yeast).